The sequence spans 369 residues: ERCC4 domain-containing protein EP364R (369 aa).

The ERCC4 domain occupies 3-101 (FLVADHREHH…QLYFFVEGPA (99 aa)). A disordered region spans residues 339 to 369 (PLHDVSDDASSDASSPTGHQTLSKEMSLNTA). Over residues 354–369 (PTGHQTLSKEMSLNTA) the composition is skewed to polar residues.

Belongs to the asfivirus EP364R family.

Plays a role in the inhibition of type I interferon signaling pathway. Mechanistically, specifically interacts with 2',3'-cGAMP and cleaves it via its phosphodiesterase activity. In turn, prevents 2',3'-cGAMP interaction with host ER-resident STING1 leading to inhibition of downstream signaling pathway and type I interferon production. This is ERCC4 domain-containing protein EP364R from African swine fever virus (isolate Tick/South Africa/Pretoriuskop Pr4/1996) (ASFV).